The following is a 460-amino-acid chain: MLSRQFVREHPEKVRDALDAKGVDADLDRILEVDEEWRELKARGDELRHDRNEVSSKIGELKQAGDEDAAQEAIERSQALKDELADVEARADDLEAELERLLLTLPMVPDEDAPVGDSEAENVERRREGFDDRRDLPESVVPHYDLGEELDILDFERGAKVSGGGFYFSKGAGARLEHALVQFMLDVHREQGYEDVFPPMPVSARSMEGTGQFPKFVEDAYRIGGENDADYDDDDLWLLPTAEVPVTNMYRDEILLDDDLPVKHQAYSPNFRREAGEHGTETRGIVRVHQFNKVELVNFVRPEDSAERFHGLLDEAEAVLRRLDLPYRVLEMCTGDMGFTQAKKYDIEVWAPGDDMDGGPEMGGRWLEVSSVSNFKDFQARRADIQYRPERHESAEHLHTLNGSGVAVPRVLVAILEYYQNDDGTVTVPEALQPYMNGQTRIEGSRKVGESALGDGDREA.

A compositionally biased stretch (basic and acidic residues) spans 50–65 (DRNEVSSKIGELKQAG). Disordered regions lie at residues 50–71 (DRNE…DAAQ) and 109–129 (PDED…RREG). Positions 109–121 (PDEDAPVGDSEAE) are enriched in acidic residues. 241 to 243 (TAE) lines the L-serine pocket. ATP-binding positions include 272–274 (RRE) and valine 288. L-serine is bound at residue glutamate 295. Residue 368–371 (EVSS) coordinates ATP. An L-serine-binding site is contributed by serine 404.

Belongs to the class-II aminoacyl-tRNA synthetase family. Type-1 seryl-tRNA synthetase subfamily. Homodimer. The tRNA molecule binds across the dimer.

The protein localises to the cytoplasm. The catalysed reaction is tRNA(Ser) + L-serine + ATP = L-seryl-tRNA(Ser) + AMP + diphosphate + H(+). The enzyme catalyses tRNA(Sec) + L-serine + ATP = L-seryl-tRNA(Sec) + AMP + diphosphate + H(+). Its pathway is aminoacyl-tRNA biosynthesis; selenocysteinyl-tRNA(Sec) biosynthesis; L-seryl-tRNA(Sec) from L-serine and tRNA(Sec): step 1/1. Catalyzes the attachment of serine to tRNA(Ser). Is also able to aminoacylate tRNA(Sec) with serine, to form the misacylated tRNA L-seryl-tRNA(Sec), which will be further converted into selenocysteinyl-tRNA(Sec). This is Serine--tRNA ligase from Halobacterium salinarum (strain ATCC 29341 / DSM 671 / R1).